The following is a 1789-amino-acid chain: MTSRPPLGVQQRQPQQRKLSGPVLSQQRSLSQSQAQAQAQAQQQQQQQQQQQQQQQQQQQQQQQQQYDASSYLPPPPPVPTRNNNHNNFSNPNNTLNNAFPPELAQQDPTSIVSPADPSGSSPALSVGVGRYGTQRRGGSRLRLELSHNDPFDAFSSPTVIESPGLVEPHTQNGSLTHPMMPLADGPDLGDMSPHHRVSIPPQHLDADVPIPFPQRRPKAVPDHSRREQPPPPPNPARKDTRPKPYTIELPAAAPRYRIRGRSDGQGGQGRSSALATASSSSTTGSSATANYGCADFFPWSGTAGNHPEDQFNDTAIRVGYSEKQFVTPETQSAKTVLFHGLKQRSGLNALSIFFAGVLWHRRNAGQVTAPSTFKPPPRVTLTDTKKEVWLKDLANSAIPLRKLSRSIPHGVRNKVLLDQCLNKNVPIDRAVWLAKCVGTNELRTFRRLGKGNNASVLEGERKWLKDWTLVIENFIERVFFSFGEQNWKAKVNYAIQLAAHLYAEGLMDREHYLDWTVSSLESSHHSQLPMWIIIAQIYWKDLLRLRKYGRRLATALISHYHVIHAHEDRDIYVPLLSKLSHLLGTLMVATPENFVSPSVWVKYRDALKTCLPQGDEARHRSFAGINYRNEQLVASANRSQPAARIILVRNLDQVILEKPMPDEFPAQCWTVSKDKAALVRALLEWCTTPYRPGLAKVYVAHRILMHWSTLRLDVTSAVLGFMEGEALEEMECKDALYHLVSELVRSGIFLVSQYIQWLITRGGLTDPQLVMPDGPPFSRLLAELPSHILGSSQKRSRDALLRRAGFRIADDAQDADMAIRHLRHALGLPAGVTDAVSMGRPFPIKKIARRIEDASRARKAEIASWLRNTVFGGELEHSSLNAFGQHDLSTRLFNSIRTVFEAAQEFSVFADVLRMLTKCSNPEVLASIADTITRYTFVFAALSCLKNLFSILHSRLREVQEQGIGARPLLASLAYLASRVPGMDEVAMQLKSDLAVSDRHNPVDACSPVSDNMVSRLSDHDGDLHEEVEKLLANGTSLDRNTMDRLFSAVIQRLQAYWSKGDEQQRVYGILLKRLRMFNPQHFDELMTRWLLYVRGLDTRATILHLYPLLVSIGCLEMPAILATASESPNALGAGNSRHPQSAVATSQIVQTTFRTRYMQEVLQLFMAPVSSESLLTPEERYRFGILQEQAKKESPRELLCLIQLALAEYTCARAQNDLEELPLDKEANQDRLLRLLKLLVLKDPVGVAKALQIRGPDAQIDGWIDRMTTKLLVTAAGEGTRVTFEQVLNLTNEFTLPFCHVKLLLSLSSNDQQQNAADSGERVPSNVELFMNAMEKSMDAQRVSWIGMLPSLSPDLTHHLKNQAQARFLNLLPSARNPPSMTLDRSMLQMRLQKAENFLAIMDTIIRGSGPMGFRQHQLVPVMVERFTDILELLQTLTPFPSQAGGLGGWGGQGASAAAAGGDSHIDLKSDILNHWLPLFLNFLTLHAQTFDTSKPGNEVRGRALMVCAGLIRELDLIHGPDFDTRQLGGRIFDLACVLVDNLAEDARLQCIQALKSPSDVKLRYIFSYQDNPHANLMLCHKERPTAMAIGTATGTGSPAPGTTPTHTPGVTPGPQNAVGAGSAVSGAGGSGNGGSYFSLPGHTQQAQAQGWHAAQQQQQQQQQQQSQQQQQQQQQQQYQLQQQQQQGGTGPIPSPAISINTNLTHLNLGNNSNPPTPSPMNPTRPAMMMVANPWGGYSWVPTMGGPQERLTPFNFRQWEMLSEPTSQVGENDTAVNLMLFESRKVQ.

4 disordered regions span residues 1-138 (MTSR…QRRG), 156-288 (SSPT…GSSA), 1592-1656 (IGTA…GWHA), and 1707-1727 (THLN…NPTR). 2 stretches are compositionally biased toward low complexity: residues 25–66 (SQQR…QQQQ) and 81–98 (TRNN…TLNN). The segment covering 107–124 (QDPTSIVSPADPSGSSPA) has biased composition (polar residues). A compositionally biased stretch (basic and acidic residues) spans 220–229 (AVPDHSRREQ). 4 stretches are compositionally biased toward low complexity: residues 271–288 (RSSA…GSSA), 1592–1628 (IGTA…SAVS), 1647–1656 (QQAQAQGWHA), and 1707–1716 (THLNLGNNSN).

This sequence belongs to the Mediator complex subunit 12 family. As to quaternary structure, component of the srb8-11 complex, which itself associates with the Mediator complex.

It is found in the nucleus. Component of the srb8-11 complex. The srb8-11 complex is a regulatory module of the Mediator complex which is itself involved in regulation of basal and activated RNA polymerase II-dependent transcription. The srb8-11 complex may be involved in the transcriptional repression of a subset of genes regulated by Mediator. It may inhibit the association of the Mediator complex with RNA polymerase II to form the holoenzyme complex. This Neurospora crassa (strain ATCC 24698 / 74-OR23-1A / CBS 708.71 / DSM 1257 / FGSC 987) protein is Mediator of RNA polymerase II transcription subunit 12 (srb8).